Consider the following 523-residue polypeptide: MFS-type transporter R5 (523 aa).

The tract at residues 19–42 (QLNEATAQRESATNNPNDSSSIDE) is disordered. Residues 21–38 (NEATAQRESATNNPNDSS) show a composition bias toward polar residues. Asn35, Asn94, and Asn143 each carry an N-linked (GlcNAc...) asparagine glycan. A run of 2 helical transmembrane segments spans residues 183-203 (AYLT…GGLL) and 211-231 (AIFW…FTFF). Residues Asn235 and Asn250 are each glycosylated (N-linked (GlcNAc...) asparagine). The next 6 membrane-spanning stretches (helical) occupy residues 291-311 (FIVC…ISIF), 319-339 (YGYS…GSIL), 381-401 (LTIS…YGWL), 408-428 (VASV…VLIA), 443-463 (ALGA…VAAV), and 470-490 (IGIG…LPAL).

Belongs to the major facilitator superfamily.

It is found in the membrane. Its function is as follows. MFS-type transporter; part of the gene cluster that mediates the biosynthesis of squalestatin S1 (SQS1, also known as zaragozic acid A), a heavily oxidized fungal polyketide that offers potent cholesterol lowering activity by targeting squalene synthase (SS). This Phoma sp. (strain ATCC 20986 / MF5453) protein is MFS-type transporter R5.